Here is a 95-residue protein sequence, read N- to C-terminus: Aspartyl/glutamyl-tRNA(Asn/Gln) amidotransferase subunit C (95 aa).

This sequence belongs to the GatC family. As to quaternary structure, heterotrimer of A, B and C subunits.

The enzyme catalyses L-glutamyl-tRNA(Gln) + L-glutamine + ATP + H2O = L-glutaminyl-tRNA(Gln) + L-glutamate + ADP + phosphate + H(+). It catalyses the reaction L-aspartyl-tRNA(Asn) + L-glutamine + ATP + H2O = L-asparaginyl-tRNA(Asn) + L-glutamate + ADP + phosphate + 2 H(+). Its function is as follows. Allows the formation of correctly charged Asn-tRNA(Asn) or Gln-tRNA(Gln) through the transamidation of misacylated Asp-tRNA(Asn) or Glu-tRNA(Gln) in organisms which lack either or both of asparaginyl-tRNA or glutaminyl-tRNA synthetases. The reaction takes place in the presence of glutamine and ATP through an activated phospho-Asp-tRNA(Asn) or phospho-Glu-tRNA(Gln). In Trichlorobacter lovleyi (strain ATCC BAA-1151 / DSM 17278 / SZ) (Geobacter lovleyi), this protein is Aspartyl/glutamyl-tRNA(Asn/Gln) amidotransferase subunit C.